A 213-amino-acid polypeptide reads, in one-letter code: MYQDKILVRQLGLQPYEPISQAMHEFTDTRDDSTLDEIWLVEHYPVFTQGQAGKAEHILMPGDIPVIQSDRGGQVTYHGPGQQVMYVLLNLKRRKLGVRELVTLLEQTVVNTLAELGIEAHPRADAPGVYVGEKKICSLGLRIRRGCSFHGLALNVNMDLSPFLRINPCGYAGMEMAKISQWKPEATTNNIAPRLLENILALLNNPDFEYITA.

Residues 32–207 form the BPL/LPL catalytic domain; the sequence is DSTLDEIWLV…NILALLNNPD (176 aa). Residues 71 to 78, 138 to 140, and 151 to 153 contribute to the substrate site; these read RGGQVTYH, SLG, and GLA. The active-site Acyl-thioester intermediate is Cys169.

This sequence belongs to the LipB family.

It localises to the cytoplasm. The catalysed reaction is octanoyl-[ACP] + L-lysyl-[protein] = N(6)-octanoyl-L-lysyl-[protein] + holo-[ACP] + H(+). Its pathway is protein modification; protein lipoylation via endogenous pathway; protein N(6)-(lipoyl)lysine from octanoyl-[acyl-carrier-protein]: step 1/2. Catalyzes the transfer of endogenously produced octanoic acid from octanoyl-acyl-carrier-protein onto the lipoyl domains of lipoate-dependent enzymes. Lipoyl-ACP can also act as a substrate although octanoyl-ACP is likely to be the physiological substrate. In Escherichia coli O8 (strain IAI1), this protein is Octanoyltransferase.